The following is a 339-amino-acid chain: MVIQKNWQELIKPNKLQVSAGDDPKRVATVVAEPLERGFGTTLGNSLRRVLLSSLQGAAVTSVQIDGVLHEFSSIPGVREDVTDIVLNIKTIAIRSQTDQPKRMTLRKTGPGLVTAGDIGAVGDIQILNPDLVICTLDDGAEIRMEFTVATGKGYVPADRNRPEDAPIGLIPVDALFSPVTKVSYRVETTREGQDLDKDKLTMTVETNGAVSPEDALAYAARIIQDQLQVFVNFEEPRKEEAAPLAPQLPFNPALLKKVDELELSVRSANCLKNDNIVYIGDLIQKSEGEMLRTPNFGRKSLNEIKEVLAGMGLHLGMDVPGWPPENIEDLAKRFEEHY.

Positions 1-235 (MVIQKNWQEL…DQLQVFVNFE (235 aa)) are alpha N-terminal domain (alpha-NTD). Positions 251 to 339 (FNPALLKKVD…DLAKRFEEHY (89 aa)) are alpha C-terminal domain (alpha-CTD).

The protein belongs to the RNA polymerase alpha chain family. As to quaternary structure, homodimer. The RNAP catalytic core consists of 2 alpha, 1 beta, 1 beta' and 1 omega subunit. When a sigma factor is associated with the core the holoenzyme is formed, which can initiate transcription.

The enzyme catalyses RNA(n) + a ribonucleoside 5'-triphosphate = RNA(n+1) + diphosphate. In terms of biological role, DNA-dependent RNA polymerase catalyzes the transcription of DNA into RNA using the four ribonucleoside triphosphates as substrates. This Methylorubrum populi (strain ATCC BAA-705 / NCIMB 13946 / BJ001) (Methylobacterium populi) protein is DNA-directed RNA polymerase subunit alpha.